The following is a 173-amino-acid chain: Lipoprotein signal peptidase (173 aa).

Transmembrane regions (helical) follow at residues 14–34 (LAWL…KYYF), 44–64 (IIVI…AAFS), 72–92 (WQRW…VVWL), and 98–118 (DDTW…GNLY). Active-site residues include Asp-128 and Asp-147. A helical membrane pass occupies residues 139–159 (YFPAFNVADSAITVGAIMLAL).

It belongs to the peptidase A8 family.

Its subcellular location is the cell inner membrane. It carries out the reaction Release of signal peptides from bacterial membrane prolipoproteins. Hydrolyzes -Xaa-Yaa-Zaa-|-(S,diacylglyceryl)Cys-, in which Xaa is hydrophobic (preferably Leu), and Yaa (Ala or Ser) and Zaa (Gly or Ala) have small, neutral side chains.. Its pathway is protein modification; lipoprotein biosynthesis (signal peptide cleavage). Functionally, this protein specifically catalyzes the removal of signal peptides from prolipoproteins. This chain is Lipoprotein signal peptidase, found in Pseudomonas syringae pv. tomato (strain ATCC BAA-871 / DC3000).